Here is a 101-residue protein sequence, read N- to C-terminus: Large ribosomal subunit protein eL30 (101 aa).

This sequence belongs to the eukaryotic ribosomal protein eL30 family.

This chain is Large ribosomal subunit protein eL30 (rpl30e), found in Thermococcus celer.